The chain runs to 118 residues: Large ribosomal subunit protein uL18 (118 aa).

The protein belongs to the universal ribosomal protein uL18 family. Part of the 50S ribosomal subunit; part of the 5S rRNA/L5/L18/L25 subcomplex. Contacts the 5S and 23S rRNAs.

This is one of the proteins that bind and probably mediate the attachment of the 5S RNA into the large ribosomal subunit, where it forms part of the central protuberance. In Dechloromonas aromatica (strain RCB), this protein is Large ribosomal subunit protein uL18.